The following is a 162-amino-acid chain: uncharacterized protein (162 aa).

One can recognise an HTH asnC-type domain in the interval 6 to 71; that stretch reads LDDLDRAILK…PIKPRKLALV (66 aa). Residues 25–44 constitute a DNA-binding region (H-T-H motif); that stretch reads IAEISNQLKKPESTVHFRIK.

This is an uncharacterized protein from Pyrococcus abyssi (strain GE5 / Orsay).